A 140-amino-acid polypeptide reads, in one-letter code: MLINYLMLLFAAMIIRSFADSGNAIETTLPEITNATTDIPAIRLCGPEGDGYCLHGDCIHARDIDGMYCRCSHGYTGIRCQHVVLVDYQRSEKPNTTTSYIPSPGIMLVLVGIIIITCCLLSVYRFTRRTKLPLQDMVVP.

A signal peptide spans 1-18; the sequence is MLINYLMLLFAAMIIRSF. Residues 19-100 are Extracellular-facing; the sequence is ADSGNAIETT…SEKPNTTTSY (82 aa). Asparagine 34 carries N-linked (GlcNAc...) asparagine; by host glycosylation. The EGF-like domain occupies 41–81; that stretch reads AIRLCGPEGDGYCLHGDCIHARDIDGMYCRCSHGYTGIRCQ. Cystine bridges form between cysteine 45/cysteine 58, cysteine 53/cysteine 69, and cysteine 71/cysteine 80. A glycan (N-linked (GlcNAc...) asparagine; by host) is linked at asparagine 95. The chain crosses the membrane as a helical span at residues 101-121; sequence IPSPGIMLVLVGIIIITCCLL. At 122–140 the chain is on the cytoplasmic side; that stretch reads SVYRFTRRTKLPLQDMVVP.

Belongs to the orthopoxvirus OPG019 family. As to quaternary structure, vaccinia growth factor interacts with host EGFR and promotes EGFR dimerization.

It is found in the host membrane. Its subcellular location is the secreted. Its function is as follows. Stimulates cellular proliferation (hyperplasia)and mobility around infected cells to promote rapid and efficient spread of infection. This effect is beneficial for virus replication in vivo, because poxviruses replicate possibly better in proliferating cells than in quiescent cells. Acts by binding host EGFR, inducing its dimerization, autophosphorylation and leading to activation of several cellular pathways regulating cell proliferation or cell survival. The activation by host EGFR of mitogen activated protein kinases (MAPK) and extracellular-signal regulated kinases (ERK) are essential for the positive effect of vaccinia growth factor on poxvirus virulence in vivo. This Homo sapiens (Human) protein is Pro-vaccinia growth factor (OPG019).